Here is a 185-residue protein sequence, read N- to C-terminus: Protein N-terminal glutamine amidohydrolase (185 aa).

Active-site residues include Cys14, His62, and Asp78.

The protein belongs to the NTAQ1 family. In terms of assembly, monomer.

The catalysed reaction is N-terminal L-glutaminyl-[protein] + H2O = N-terminal L-glutamyl-[protein] + NH4(+). Mediates the side-chain deamidation of N-terminal glutamine residues to glutamate, an important step in N-end rule pathway of protein degradation. Conversion of the resulting N-terminal glutamine to glutamate renders the protein susceptible to arginylation, polyubiquitination and degradation as specified by the N-end rule. Does not act on substrates with internal or C-terminal glutamine and does not act on non-glutamine residues in any position. The chain is Protein N-terminal glutamine amidohydrolase from Caenorhabditis briggsae.